The chain runs to 413 residues: NAD(P)H oxidoreductase RTN4IP1, mitochondrial (413 aa).

The transit peptide at 1–23 (MTAAGFNSILCLRQLVRLNRRQY) directs the protein to the mitochondrion. The segment at 27-52 (AKSVLSGSQTNDQATPPPTSKSADKM) is disordered. Polar residues predominate over residues 31–40 (LSGSQTNDQA). Residues 61-405 (GDIDELQLSE…SGHLRGKIVV (345 aa)) form the Enoyl reductase (ER) domain. The NADPH site is built by Ser-228, Gly-230, Val-231, Ser-251, Tyr-269, Gly-353, Phe-355, His-398, and Arg-400.

This sequence belongs to the zinc-containing alcohol dehydrogenase family. Quinone oxidoreductase subfamily.

Its subcellular location is the mitochondrion matrix. The catalysed reaction is a quinone + NADH + H(+) = a quinol + NAD(+). The enzyme catalyses a quinone + NADPH + H(+) = a quinol + NADP(+). The protein operates within cofactor biosynthesis; ubiquinone biosynthesis. NAD(P)H oxidoreductase. Involved in the ubiquinone biosynthetic pathway. This chain is NAD(P)H oxidoreductase RTN4IP1, mitochondrial, found in Drosophila melanogaster (Fruit fly).